Reading from the N-terminus, the 340-residue chain is Sesquiterpene synthase 6 (340 aa).

Aspartate 90, asparagine 229, serine 233, and glutamate 237 together coordinate Mg(2+). The DDXXD motif motif lies at aspartate 90–aspartate 94. The NSE/DTE motif signature appears at asparagine 229 to glutamate 237. The (2E,6E)-farnesyl diphosphate site is built by arginine 316 and tyrosine 317.

The protein belongs to the terpene synthase family. The cofactor is Mg(2+).

The catalysed reaction is (2E,6E)-farnesyl diphosphate = delta-cadinene + diphosphate. The enzyme catalyses (2E,6E)-farnesyl diphosphate = bicyclogermacrene + diphosphate. Its function is as follows. Terpene cyclase that catalyzes the cyclization of farnesyl diphosphate (FPP) to various sesquiterpenes, including bicycloelemene, alpha-gurjunene, 9-epi-caryophylene, bicyclosesquiphellandrene, bicyclogermacrene and delta-cadinene. This chain is Sesquiterpene synthase 6, found in Postia placenta (strain ATCC 44394 / Madison 698-R) (Brown rot fungus).